The primary structure comprises 182 residues: MFSFHERMKKKHVTIRVYKHERILVFLFVLFISTTDFSTEIIMIQTINWIVWKLFIIYISLDLFSLKLVNSEENSNSIITDEDYDHYNSSLDSSNNVKHSQEAFHRNSDPDGFPEYEFLNETSIEIKEELGQELHQLQLILDELSRRIRATPNSANKYMKNEFLMSSCIVITLNLFIFMYKS.

A signal peptide spans 1–35; that stretch reads MFSFHERMKKKHVTIRVYKHERILVFLFVLFISTT. Asn-88 and Asn-120 each carry an N-linked (GlcNAc...) asparagine glycan. Residues 162–180 form a helical membrane-spanning segment; that stretch reads EFLMSSCIVITLNLFIFMY. Cys-168 carries the S-palmitoyl cysteine lipid modification.

It localises to the cell membrane. In terms of biological role, major antigen in the surface tegument. This is Antigenic integral membrane glycoprotein from Schistosoma mansoni (Blood fluke).